Here is a 182-residue protein sequence, read N- to C-terminus: Adenine phosphoribosyltransferase (182 aa).

Belongs to the purine/pyrimidine phosphoribosyltransferase family. Homodimer.

It is found in the cytoplasm. The catalysed reaction is AMP + diphosphate = 5-phospho-alpha-D-ribose 1-diphosphate + adenine. The protein operates within purine metabolism; AMP biosynthesis via salvage pathway; AMP from adenine: step 1/1. Its function is as follows. Catalyzes a salvage reaction resulting in the formation of AMP, that is energically less costly than de novo synthesis. This is Adenine phosphoribosyltransferase from Pseudomonas paraeruginosa (strain DSM 24068 / PA7) (Pseudomonas aeruginosa (strain PA7)).